We begin with the raw amino-acid sequence, 473 residues long: Probable glucose-6-phosphate 1-dehydrogenase C7.13c (473 aa).

NADP(+) contacts are provided by Arg43, Tyr121, and Lys144. D-glucose 6-phosphate contacts are provided by residues Lys144, 174-178 (HYTAK), Glu213, and Asp232. The active-site Proton acceptor is the His237. Lys331 is a binding site for D-glucose 6-phosphate. Lys341 is a binding site for NADP(+). Gln366 is a binding site for D-glucose 6-phosphate.

Belongs to the glucose-6-phosphate dehydrogenase family.

It localises to the cytoplasm. The catalysed reaction is D-glucose 6-phosphate + NADP(+) = 6-phospho-D-glucono-1,5-lactone + NADPH + H(+). It participates in carbohydrate degradation; pentose phosphate pathway; D-ribulose 5-phosphate from D-glucose 6-phosphate (oxidative stage): step 1/3. In terms of biological role, catalyzes the rate-limiting step of the oxidative pentose-phosphate pathway, which represents a route for the dissimilation of carbohydrates besides glycolysis. The main function of this enzyme is to provide reducing power (NADPH) and pentose phosphates for fatty acid and nucleic acid synthesis. This Schizosaccharomyces pombe (strain 972 / ATCC 24843) (Fission yeast) protein is Probable glucose-6-phosphate 1-dehydrogenase C7.13c.